Reading from the N-terminus, the 853-residue chain is Deubiquitinase otu (853 aa).

The tract at residues 1–20 (MDMQVQRPITSGSRQAPDPY) is disordered. An OTU domain is found at 29–150 (LYRKHTARDA…ENHFDSVYDV (122 aa)). Aspartate 37 is a catalytic residue. The active-site Nucleophile is serine 40. Residue histidine 143 is part of the active site. The Tudor domain occupies 336–396 (NFKVGAKCKV…HPLPPDEYRP (61 aa)). The LC domain stretch occupies residues 396 to 853 (PWSLPFRYHR…AAVYAATRHH (458 aa)). The span at 460–470 (QDDEQRDHNDP) shows a compositional bias: basic and acidic residues. Disordered regions lie at residues 460-531 (QDDE…YVPM), 681-704 (AVES…LEKS), 732-794 (GPAA…AAQG), and 817-853 (NMDP…TRHH). Low complexity predominate over residues 499–517 (SRVQPQNSSSSQNQEVSGS). The segment covering 747–758 (NGSQFSFYTTPS) has biased composition (polar residues). Positions 769–778 (LLQPPPPPPI) are enriched in pro residues. 2 stretches are compositionally biased toward low complexity: residues 783–794 (AGPPQLGGAAQG) and 820–838 (PSAQ…APLS).

As to quaternary structure, self aggregates, forming amyloid-like fibrillar helical structures; protein aggregation is mediated by the C-terminal LC domain, is enhanced by RNA binding and is essential for deubiquitinase activity. Interacts (via OTU domain) with bam (via C-terminus); the interaction enhances otu aggregation and deubiquitinase activity. Together with bam interacts with CycA/cyclin-A; the interaction stabilizes CycA by promoting its deubiquitination. Together with bam interacts with Traf6. Interacts with Hrb27C; the interaction is RNA-independent. Associates (via N-terminus) with mRNP complexes; the interaction is weak. Expressed at high levels in the ovary, at low levels in the brain and fat body, and at moderate levels in the gut.

The protein resides in the cytoplasm. Its subcellular location is the cell cortex. The protein localises to the perinuclear region. With respect to regulation, activated by protein aggregation, which is mediated by the LC domain and enhanced by RNA binding. In terms of biological role, catalytic component of a deubiquitinase complex consisting of bam and otu. The complex deubiquitinates K63-linked polyubiquitinated proteins; this antagonizes the ubiquitination activity of Traf6 and regulates the IMD immune signaling pathway. Otu-bam deubiquitinase activity is regulated by Traf6 dependent immune signaling regulation of bam expression levels; this forms a feedback loop that regulates the IMD immune signaling pathway and balances gut immune activity during aging. The complex deubiquitinates and stabilizes CycA/cyclin-A to regulate CycA-dependent differentiation. Involved in grk mRNA localization to the dorsal anterior region of the oocyte required for dorsal-ventral axis determination; may function as a ribonuclear protein complex together with sqd and Hrb27C. May regulate actin cytoskeleton organization in differentiating cystocytes during fusome maturation; required for efficient nurse cell cytoplasmic dumping during oogenesis. Essential for female fertility; involved in germ cell proliferation and germ cell differentiation. Involved in the early stages of germ cell proliferation and differentiation during oogenesis. Required for polytene chromosome dispersal in nurse cells during oogenesis. Functionally, involved in the later stages of germ cell proliferation and differentiation during oogenesis. This is Deubiquitinase otu from Drosophila melanogaster (Fruit fly).